Reading from the N-terminus, the 541-residue chain is Chaperonin GroEL 2 (541 aa).

ATP contacts are provided by residues 29 to 32 (TLGP), 86 to 90 (DGTTT), G413, 476 to 478 (NAA), and D492.

Belongs to the chaperonin (HSP60) family. As to quaternary structure, forms a cylinder of 14 subunits composed of two heptameric rings stacked back-to-back. Interacts with the co-chaperonin GroES.

The protein localises to the secreted. It localises to the capsule. It is found in the cell surface. Its subcellular location is the cell wall. It carries out the reaction ATP + H2O + a folded polypeptide = ADP + phosphate + an unfolded polypeptide.. In terms of biological role, together with its co-chaperonin GroES, plays an essential role in assisting protein folding. The GroEL-GroES system forms a nano-cage that allows encapsulation of the non-native substrate proteins and provides a physical environment optimized to promote and accelerate protein folding. This chain is Chaperonin GroEL 2, found in Mycobacterium sp. (strain KMS).